Consider the following 400-residue polypeptide: Formate-dependent phosphoribosylglycinamide formyltransferase (400 aa).

Residues 22-23 (EL) and E82 each bind N(1)-(5-phospho-beta-D-ribosyl)glycinamide. ATP-binding positions include R115, K156, 161 to 166 (SSGKGQ), 196 to 199 (EGFI), and E204. The ATP-grasp domain occupies 120–309 (RLAAETLGLP…EFALHARAIL (190 aa)). E268 and E280 together coordinate Mg(2+). N(1)-(5-phospho-beta-D-ribosyl)glycinamide is bound by residues D287, K361, and 368–369 (RR).

It belongs to the PurK/PurT family. In terms of assembly, homodimer.

The enzyme catalyses N(1)-(5-phospho-beta-D-ribosyl)glycinamide + formate + ATP = N(2)-formyl-N(1)-(5-phospho-beta-D-ribosyl)glycinamide + ADP + phosphate + H(+). It functions in the pathway purine metabolism; IMP biosynthesis via de novo pathway; N(2)-formyl-N(1)-(5-phospho-D-ribosyl)glycinamide from N(1)-(5-phospho-D-ribosyl)glycinamide (formate route): step 1/1. Its function is as follows. Involved in the de novo purine biosynthesis. Catalyzes the transfer of formate to 5-phospho-ribosyl-glycinamide (GAR), producing 5-phospho-ribosyl-N-formylglycinamide (FGAR). Formate is provided by PurU via hydrolysis of 10-formyl-tetrahydrofolate. The polypeptide is Formate-dependent phosphoribosylglycinamide formyltransferase (Xanthomonas campestris pv. campestris (strain 8004)).